We begin with the raw amino-acid sequence, 693 residues long: Glycine--tRNA ligase beta subunit (693 aa).

The protein belongs to the class-II aminoacyl-tRNA synthetase family. Tetramer of two alpha and two beta subunits.

It localises to the cytoplasm. The catalysed reaction is tRNA(Gly) + glycine + ATP = glycyl-tRNA(Gly) + AMP + diphosphate. The chain is Glycine--tRNA ligase beta subunit from Natranaerobius thermophilus (strain ATCC BAA-1301 / DSM 18059 / JW/NM-WN-LF).